We begin with the raw amino-acid sequence, 453 residues long: Adenylyltransferase and sulfurtransferase MOCS3 (453 aa).

T62 bears the Phosphothreonine mark. Residues G101, D122, 129 to 133 (SNFHR), K146, and 190 to 191 (DN) contribute to the ATP site. 2 residues coordinate Zn(2+): C231 and C234. C248 acts as the Glycyl thioester intermediate; for adenylyltransferase activity in catalysis. Residues C306 and C309 each coordinate Zn(2+). The region spanning 355–451 (QAKPHLLIDV…WTSNIDPNFP (97 aa)) is the Rhodanese domain. The Cysteine persulfide intermediate; for sulfurtransferase activity role is filled by C410.

The protein in the N-terminal section; belongs to the HesA/MoeB/ThiF family. UBA4 subfamily. The cofactor is Zn(2+).

Its subcellular location is the cytoplasm. It is found in the cytosol. It catalyses the reaction [molybdopterin-synthase sulfur-carrier protein]-C-terminal Gly-Gly + ATP + H(+) = [molybdopterin-synthase sulfur-carrier protein]-C-terminal Gly-Gly-AMP + diphosphate. It carries out the reaction [molybdopterin-synthase sulfur-carrier protein]-C-terminal Gly-Gly-AMP + S-sulfanyl-L-cysteinyl-[cysteine desulfurase] + AH2 = [molybdopterin-synthase sulfur-carrier protein]-C-terminal-Gly-aminoethanethioate + L-cysteinyl-[cysteine desulfurase] + A + AMP + 2 H(+). The protein operates within tRNA modification; 5-methoxycarbonylmethyl-2-thiouridine-tRNA biosynthesis. It functions in the pathway cofactor biosynthesis; molybdopterin biosynthesis. Functionally, plays a central role in 2-thiolation of mcm(5)S(2)U at tRNA wobble positions of cytosolic tRNA(Lys), tRNA(Glu) and tRNA(Gln). Also essential during biosynthesis of the molybdenum cofactor. Acts by mediating the C-terminal thiocarboxylation of sulfur carriers URM1 and MOCS2A. Its N-terminus first activates URM1 and MOCS2A as acyl-adenylates (-COAMP), then the persulfide sulfur on the catalytic cysteine is transferred to URM1 and MOCS2A to form thiocarboxylation (-COSH) of their C-terminus. The reaction probably involves hydrogen sulfide that is generated from the persulfide intermediate and that acts as a nucleophile towards URM1 and MOCS2A. Subsequently, a transient disulfide bond is formed. Does not use thiosulfate as sulfur donor; NFS1 probably acting as a sulfur donor for thiocarboxylation reactions. In Drosophila sechellia (Fruit fly), this protein is Adenylyltransferase and sulfurtransferase MOCS3.